Reading from the N-terminus, the 624-residue chain is Probable pectinesterase/pectinesterase inhibitor 47 (624 aa).

The first 19 residues, 1 to 19, serve as a signal peptide directing secretion; the sequence is MQTHSSSLVFLALLCLSWA. A disordered region spans residues 24–88; sequence PTRPPSQPPS…PSPLPPNIAC (65 aa). Pro residues predominate over residues 25–84; it reads TRPPSQPPSHPPIQPSSQPPTQPPSQPPTQPPTQPPSHPPTQPPTPPPSQSPSQPSPLPP. The pectinesterase inhibitor 47 stretch occupies residues 74–236; the sequence is QSPSQPSPLP…TRLYSVSLGL (163 aa). Residues asparagine 225, asparagine 330, asparagine 369, and asparagine 376 are each glycosylated (N-linked (GlcNAc...) asparagine). Residues 307–606 form a pectinesterase 47 region; it reads AVTVGPYETD…FTVYNFTLGD (300 aa). Substrate is bound at residue threonine 385. Asparagine 387 carries N-linked (GlcNAc...) asparagine glycosylation. Position 415 (glutamine 415) interacts with substrate. The Proton donor; for pectinesterase activity role is filled by aspartate 438. Cysteine 452 and cysteine 472 are oxidised to a cystine. Aspartate 459 (nucleophile; for pectinesterase activity) is an active-site residue. Asparagine 505 carries an N-linked (GlcNAc...) asparagine glycan. Positions 527 and 529 each coordinate substrate. N-linked (GlcNAc...) asparagine glycosylation is found at asparagine 555, asparagine 596, and asparagine 601.

In the N-terminal section; belongs to the PMEI family. It in the C-terminal section; belongs to the pectinesterase family.

It is found in the secreted. The protein resides in the cell wall. The enzyme catalyses [(1-&gt;4)-alpha-D-galacturonosyl methyl ester](n) + n H2O = [(1-&gt;4)-alpha-D-galacturonosyl](n) + n methanol + n H(+). Its pathway is glycan metabolism; pectin degradation; 2-dehydro-3-deoxy-D-gluconate from pectin: step 1/5. Functionally, acts in the modification of cell walls via demethylesterification of cell wall pectin. This is Probable pectinesterase/pectinesterase inhibitor 47 (PME47) from Arabidopsis thaliana (Mouse-ear cress).